Consider the following 206-residue polypeptide: Small ribosomal subunit protein uS4 (206 aa).

An S4 RNA-binding domain is found at 96-156 (GRLDNVVYRM…EKAKKQARIK (61 aa)).

Belongs to the universal ribosomal protein uS4 family. In terms of assembly, part of the 30S ribosomal subunit. Contacts protein S5. The interaction surface between S4 and S5 is involved in control of translational fidelity.

In terms of biological role, one of the primary rRNA binding proteins, it binds directly to 16S rRNA where it nucleates assembly of the body of the 30S subunit. Functionally, with S5 and S12 plays an important role in translational accuracy. This is Small ribosomal subunit protein uS4 from Aeromonas hydrophila subsp. hydrophila (strain ATCC 7966 / DSM 30187 / BCRC 13018 / CCUG 14551 / JCM 1027 / KCTC 2358 / NCIMB 9240 / NCTC 8049).